The sequence spans 153 residues: Alpha-amylase type B isozyme (153 aa).

Residues K19, 25-27 (GWW), H38, Q44, K123, and W150 each bind substrate.

It belongs to the glycosyl hydrolase 13 family. In terms of assembly, monomer. Ca(2+) is required as a cofactor.

It carries out the reaction Endohydrolysis of (1-&gt;4)-alpha-D-glucosidic linkages in polysaccharides containing three or more (1-&gt;4)-alpha-linked D-glucose units.. The sequence is that of Alpha-amylase type B isozyme (AMY1.4) from Hordeum vulgare (Barley).